The following is a 203-amino-acid chain: Peptidyl-tRNA hydrolase (203 aa).

Tyr18 is a binding site for tRNA. The active-site Proton acceptor is His23. Residues Tyr69, Asn71, and Asn117 each coordinate tRNA.

The protein belongs to the PTH family. As to quaternary structure, monomer.

The protein localises to the cytoplasm. It carries out the reaction an N-acyl-L-alpha-aminoacyl-tRNA + H2O = an N-acyl-L-amino acid + a tRNA + H(+). In terms of biological role, hydrolyzes ribosome-free peptidyl-tRNAs (with 1 or more amino acids incorporated), which drop off the ribosome during protein synthesis, or as a result of ribosome stalling. Functionally, catalyzes the release of premature peptidyl moieties from peptidyl-tRNA molecules trapped in stalled 50S ribosomal subunits, and thus maintains levels of free tRNAs and 50S ribosomes. This is Peptidyl-tRNA hydrolase from Parasynechococcus marenigrum (strain WH8102).